Consider the following 389-residue polypeptide: Ethanolamine-phosphate cytidylyltransferase (389 aa).

CTP is bound by residues 221 to 222, 229 to 232, lysine 259, 307 to 310, and 336 to 340; these read AF, HVDF, HGKT, and SGNDL. Threonine 341 and threonine 342 each carry phosphothreonine.

The protein belongs to the cytidylyltransferase family.

The catalysed reaction is phosphoethanolamine + CTP + H(+) = CDP-ethanolamine + diphosphate. It participates in phospholipid metabolism; phosphatidylethanolamine biosynthesis; phosphatidylethanolamine from ethanolamine: step 2/3. In terms of biological role, ethanolamine-phosphate cytidylyltransferase that catalyzes the second step in the synthesis of phosphatidylethanolamine (PE) from ethanolamine via the CDP-ethanolamine pathway. Phosphatidylethanolamine is a dominant inner-leaflet phospholipid in cell membranes, where it plays a role in membrane function by structurally stabilizing membrane-anchored proteins, and participates in important cellular processes such as cell division, cell fusion, blood coagulation, and apoptosis. The chain is Ethanolamine-phosphate cytidylyltransferase (PCYT2) from Bos taurus (Bovine).